A 168-amino-acid polypeptide reads, in one-letter code: Peptide deformylase 1 (168 aa).

Positions 91 and 133 each coordinate Fe cation. Glu134 is an active-site residue. His137 serves as a coordination point for Fe cation.

Belongs to the polypeptide deformylase family. Requires Fe(2+) as cofactor.

It catalyses the reaction N-terminal N-formyl-L-methionyl-[peptide] + H2O = N-terminal L-methionyl-[peptide] + formate. Functionally, removes the formyl group from the N-terminal Met of newly synthesized proteins. Requires at least a dipeptide for an efficient rate of reaction. N-terminal L-methionine is a prerequisite for activity but the enzyme has broad specificity at other positions. The protein is Peptide deformylase 1 of Vibrio vulnificus (strain YJ016).